Here is a 217-residue protein sequence, read N- to C-terminus: Probable glutathione S-transferase DHAR4 (217 aa).

The glutathione site is built by K8 and D19. K8 and D19 together coordinate L-ascorbate. The GST N-terminal domain maps to 10–85 (ASGAPDVLGD…DLIVGIIEEK (76 aa)). The Nucleophile role is filled by C20. A Glutathione-binding motif is present at residues 20–25 (CPFGQR). The glutathione site is built by K47, S75, H164, and W211. In terms of domain architecture, GST C-terminal spans 86-217 (YPEPSLVTFP…IASWAPKLDV (132 aa)). K214 provides a ligand contact to L-ascorbate.

This sequence belongs to the GST superfamily. DHAR family. In terms of assembly, monomer.

It localises to the cytoplasm. It is found in the cytosol. It carries out the reaction RX + glutathione = an S-substituted glutathione + a halide anion + H(+). The catalysed reaction is L-dehydroascorbate + 2 glutathione = glutathione disulfide + L-ascorbate. In terms of biological role, exhibits glutathione-dependent thiol transferase and dehydroascorbate (DHA) reductase activities. The polypeptide is Probable glutathione S-transferase DHAR4 (DHAR4) (Arabidopsis thaliana (Mouse-ear cress)).